Reading from the N-terminus, the 383-residue chain is MAADHTHVRPWRMITRRQSRKIRVGSVEVGGDAPISVQSMTNTLTSDAAATLEQIRQLEEAGADIVRVSCPDVESTAAFKTIAREAKVPLVADIHFHYKRGIEAAQAGAACLRINPGNIGSPDRVRDVIQAARDHGCSMRIGVNAGSLERELLEKYGEPCPDAMVESALNHARILQDHDFHEFKISVKASDPFMTVAAYYQLAEAIDCPLHLGVTEAGATRTGTVKSAIGIGAMLWAGIGDTIRVSLAADPVEEIKVGFDILKSLGLRHRGVNIIACPSCARQGFNVIKTVEALEERLAHISTPMSLSIIGCVVNGPGEALMTDIGFTGGGAGAGMVYMAGKPDHKQSNEGMIDHIVDLVEKKAAEIQAAKAQDEAAQTVAAE.

[4Fe-4S] cluster contacts are provided by C277, C280, C312, and E319.

Belongs to the IspG family. Requires [4Fe-4S] cluster as cofactor.

It catalyses the reaction (2E)-4-hydroxy-3-methylbut-2-enyl diphosphate + oxidized [flavodoxin] + H2O + 2 H(+) = 2-C-methyl-D-erythritol 2,4-cyclic diphosphate + reduced [flavodoxin]. It functions in the pathway isoprenoid biosynthesis; isopentenyl diphosphate biosynthesis via DXP pathway; isopentenyl diphosphate from 1-deoxy-D-xylulose 5-phosphate: step 5/6. Converts 2C-methyl-D-erythritol 2,4-cyclodiphosphate (ME-2,4cPP) into 1-hydroxy-2-methyl-2-(E)-butenyl 4-diphosphate. The chain is 4-hydroxy-3-methylbut-2-en-1-yl diphosphate synthase (flavodoxin) from Caulobacter vibrioides (strain ATCC 19089 / CIP 103742 / CB 15) (Caulobacter crescentus).